The chain runs to 130 residues: Dihydroneopterin aldolase (130 aa).

Substrate is bound by residues Glu-22, Tyr-54, and 73–74 (IE). Lys-100 functions as the Proton donor/acceptor in the catalytic mechanism.

This sequence belongs to the DHNA family.

It carries out the reaction 7,8-dihydroneopterin = 6-hydroxymethyl-7,8-dihydropterin + glycolaldehyde. It functions in the pathway cofactor biosynthesis; tetrahydrofolate biosynthesis; 2-amino-4-hydroxy-6-hydroxymethyl-7,8-dihydropteridine diphosphate from 7,8-dihydroneopterin triphosphate: step 3/4. Catalyzes the conversion of 7,8-dihydroneopterin to 6-hydroxymethyl-7,8-dihydropterin. The sequence is that of Dihydroneopterin aldolase (folB) from Methylorubrum extorquens (strain ATCC 14718 / DSM 1338 / JCM 2805 / NCIMB 9133 / AM1) (Methylobacterium extorquens).